We begin with the raw amino-acid sequence, 436 residues long: Proline--tRNA ligase (436 aa).

This sequence belongs to the class-II aminoacyl-tRNA synthetase family. ProS type 2 subfamily. In terms of assembly, homodimer.

It localises to the cytoplasm. The enzyme catalyses tRNA(Pro) + L-proline + ATP = L-prolyl-tRNA(Pro) + AMP + diphosphate. Catalyzes the attachment of proline to tRNA(Pro) in a two-step reaction: proline is first activated by ATP to form Pro-AMP and then transferred to the acceptor end of tRNA(Pro). The chain is Proline--tRNA ligase from Neorickettsia sennetsu (strain ATCC VR-367 / Miyayama) (Ehrlichia sennetsu).